A 200-amino-acid polypeptide reads, in one-letter code: Small ribosomal subunit protein uS4c (200 aa).

Positions 90 to 150 (MRLDNIIFRL…NRKESVIIKN (61 aa)) constitute an S4 RNA-binding domain.

Belongs to the universal ribosomal protein uS4 family. As to quaternary structure, part of the 30S ribosomal subunit. Contacts protein S5. The interaction surface between S4 and S5 is involved in control of translational fidelity.

It localises to the plastid. The protein localises to the chloroplast. One of the primary rRNA binding proteins, it binds directly to 16S rRNA where it nucleates assembly of the body of the 30S subunit. In terms of biological role, with S5 and S12 plays an important role in translational accuracy. The sequence is that of Small ribosomal subunit protein uS4c (rps4) from Pellia neesiana (Liverwort).